We begin with the raw amino-acid sequence, 354 residues long: Ephrin-4 (354 aa).

The N-terminal stretch at 1–22 (MKRPLDFLLAICLILLRSSTFA) is a signal peptide. Residues 23 to 173 (DEHTVHWNST…SKNMRLSMKV (151 aa)) enclose the Ephrin RBD domain. An N-linked (GlcNAc...) asparagine glycan is attached at N30. 2 cysteine pairs are disulfide-bonded: C55/C92 and C80/C162. The segment at 173–196 (VLSSQPTPSPSSKPARSRTDARRQ) is disordered. Over residues 175–186 (SSQPTPSPSSKP) the composition is skewed to low complexity. S335 carries the GPI-anchor amidated serine lipid modification. Positions 336 to 354 (SSSLPTFLIVFLIAVNLLF) are cleaved as a propeptide — removed in mature form.

The protein belongs to the ephrin family. In terms of processing, may undergo proteolysis by metalloprotease sup-17 to give rise to a soluble form.

It localises to the cell membrane. Regulates the formation or stabilization of cell-cell contacts at several stages of epithelial morphogenesis. In early embryonic development, involved in ventral closure of the epidermis. During male tail morphogenesis, regulates precursor cell sorting together with mab-20 and allows the formation of distinct sensory rays. Probably acts as a ligand for lad-2 to regulate axon guidance of several neurons including SDQL, SDQR, SMD and PLN neurons during neurogenesis. This Caenorhabditis briggsae protein is Ephrin-4 (efn-4).